The chain runs to 282 residues: MALLSFERKYRVPGGTLVGGNLFDFWVGPFYVGFFGVATFFFAALGIILIAWSAVLQGTWNPQLISVYPPALEYGLGGAPLAKGGLWQIITICATGAFVSWALREVEICRKLGIGYHIPFAFAFAILAYLTLVLFRPVMMGAWGYAFPYGIWTHLDWVSNTGYTYGNFHYNPAHMIAISFFFTNALALALHGALVLSAANPEKGKEMRTPDHEDTFFRDLVGYSIGTLGIHRLGLLLSLSAVFFSALCMIITGTIWFDQWVDWWQWWVKLPWWANIPGGING.

The Cytoplasmic portion of the chain corresponds to 2-32; the sequence is ALLSFERKYRVPGGTLVGGNLFDFWVGPFYV. Residues 33–56 traverse the membrane as a helical segment; the sequence is GFFGVATFFFAALGIILIAWSAVL. The Periplasmic segment spans residues 57-83; sequence QGTWNPQLISVYPPALEYGLGGAPLAK. The helical transmembrane segment at 84–112 threads the bilayer; the sequence is GGLWQIITICATGAFVSWALREVEICRKL. The Cytoplasmic segment spans residues 113 to 116; it reads GIGY. Residues 117–139 form a helical membrane-spanning segment; it reads HIPFAFAFAILAYLTLVLFRPVM. The Periplasmic portion of the chain corresponds to 140-171; the sequence is MGAWGYAFPYGIWTHLDWVSNTGYTYGNFHYN. 2 residues coordinate (7R,8Z)-bacteriochlorophyll b: H154 and H174. The helical transmembrane segment at 172–199 threads the bilayer; that stretch reads PAHMIAISFFFTNALALALHGALVLSAA. A Fe cation-binding site is contributed by H191. Topologically, residues 200 to 225 are cytoplasmic; the sequence is NPEKGKEMRTPDHEDTFFRDLVGYSI. A ubiquinone is bound at residue F217. Residues 226-251 form a helical membrane-spanning segment; the sequence is GTLGIHRLGLLLSLSAVFFSALCMII. Residue H231 participates in Fe cation binding. Topologically, residues 252–282 are periplasmic; it reads TGTIWFDQWVDWWQWWVKLPWWANIPGGING.

This sequence belongs to the reaction center PufL/M/PsbA/D family. Reaction center is composed of four bacteriochlorophylls, two bacteriopheophytins, two ubiquinones, one iron, and three highly hydrophobic polypeptide chains (designated L, M, and H).

The protein localises to the cellular chromatophore membrane. Functionally, the reaction center is a membrane-bound complex that mediates the initial photochemical event in the electron transfer process of photosynthesis. The polypeptide is Reaction center protein L chain (pufL) (Cereibacter sphaeroides (strain ATCC 17023 / DSM 158 / JCM 6121 / CCUG 31486 / LMG 2827 / NBRC 12203 / NCIMB 8253 / ATH 2.4.1.) (Rhodobacter sphaeroides)).